A 186-amino-acid chain; its full sequence is Lipid A palmitoyltransferase PagP (186 aa).

Residues 1–25 (MNVSKYVAIFSFVFIQLISVGKVFA) form the signal peptide. Residues His58, Asp101, and Ser102 contribute to the active site.

It belongs to the lipid A palmitoyltransferase family. In terms of assembly, homodimer.

The protein resides in the cell outer membrane. The catalysed reaction is lipid A (E. coli) + a 1-hexadecanoyl-2-acyl-sn-glycero-3-phosphocholine = hepta-acyl lipid A (E. coli) + a 2-acyl-sn-glycero-3-phosphocholine. It catalyses the reaction lipid IIA + a 1-hexadecanoyl-2-acyl-sn-glycero-3-phosphocholine = lipid IIB + a 2-acyl-sn-glycero-3-phosphocholine. It carries out the reaction lipid IVA (E. coli) + a 1-hexadecanoyl-2-acyl-sn-glycero-3-phosphocholine = lipid IVB (E. coli) + a 2-acyl-sn-glycero-3-phosphocholine. In terms of biological role, transfers a palmitate residue from the sn-1 position of a phospholipid to the N-linked hydroxymyristate on the proximal unit of lipid A or its precursors. The polypeptide is Lipid A palmitoyltransferase PagP (Escherichia coli (strain ATCC 55124 / KO11FL)).